Reading from the N-terminus, the 216-residue chain is Ribosomal RNA large subunit methyltransferase E (216 aa).

5 residues coordinate S-adenosyl-L-methionine: Gly-60, Trp-62, Asp-80, Asp-96, and Asp-121. Catalysis depends on Lys-161, which acts as the Proton acceptor.

Belongs to the class I-like SAM-binding methyltransferase superfamily. RNA methyltransferase RlmE family.

It is found in the cytoplasm. The enzyme catalyses uridine(2552) in 23S rRNA + S-adenosyl-L-methionine = 2'-O-methyluridine(2552) in 23S rRNA + S-adenosyl-L-homocysteine + H(+). In terms of biological role, specifically methylates the uridine in position 2552 of 23S rRNA at the 2'-O position of the ribose in the fully assembled 50S ribosomal subunit. This chain is Ribosomal RNA large subunit methyltransferase E, found in Pseudomonas fluorescens (strain SBW25).